The chain runs to 165 residues: Putative ankyrin repeat domain-containing protein 20A5 (165 aa).

ANK repeat units follow at residues 66 to 95, 99 to 128, and 132 to 161; these read QHRT…QIDI, ENRT…NPNL, and YGNT…NIEA.

This Homo sapiens (Human) protein is Putative ankyrin repeat domain-containing protein 20A5 (ANKRD20A5P).